The chain runs to 61 residues: Large ribosomal subunit protein eL37 (61 aa).

Positions 18, 21, 33, and 36 each coordinate Zn(2+). The C4-type zinc finger occupies 18–36 (CRRCGRNAYNPTKKYCASC).

Belongs to the eukaryotic ribosomal protein eL37 family. Zn(2+) serves as cofactor.

Binds to the 23S rRNA. This is Large ribosomal subunit protein eL37 from Methanosphaera stadtmanae (strain ATCC 43021 / DSM 3091 / JCM 11832 / MCB-3).